The primary structure comprises 359 residues: Protein trichome birefringence-like 42 (359 aa).

The helical; Signal-anchor for type II membrane protein transmembrane segment at 7–25 (LFLLLLIFLVDLSDYGVLA) threads the bilayer. The GDS motif motif lies at 110–112 (GDS). A DCXHWCLPGXXDXWN motif motif is present at residues 335-349 (DCSHWCLPGVPDAWN).

It belongs to the PC-esterase family. TBL subfamily.

It localises to the membrane. Functionally, may act as a bridging protein that binds pectin and other cell wall polysaccharides. Probably involved in maintaining esterification of pectins. May be involved in the specific O-acetylation of cell wall polymers. The protein is Protein trichome birefringence-like 42 (TBL42) of Arabidopsis thaliana (Mouse-ear cress).